We begin with the raw amino-acid sequence, 433 residues long: tRNA-queuosine alpha-mannosyltransferase (433 aa).

Residues 194-244 (PAAKSHIQTSSPSSYPDVEPPEKMLNVAGTNQSHEPTSVTPHQETASPLCG) form a disordered region. A compositionally biased stretch (polar residues) spans 221 to 239 (AGTNQSHEPTSVTPHQETA).

The protein belongs to the glycosyltransferase group 1 family. Glycosyltransferase 4 subfamily.

The protein resides in the cytoplasm. It is found in the nucleus. The enzyme catalyses queuosine(34) in tRNA(Asp) + GDP-alpha-D-mannose = O-4''-alpha-D-mannosylqueuosine(34) in tRNA(Asp) + GDP + H(+). Glycosyltransferase that specifically catalyzes mannosylation of cytoplasmic tRNA(Asp) modified with queuosine at position 34 (queuosine(34)). Mannosylates the cyclopentene moiety of queuosine(34) in tRNA(Asp) to form mannosyl-queuosine(34). Mannosylation of queuosine(34) in tRNA(Asp) is required to slow-down elongation at cognate codons, GAC and GAU, thereby regulating protein translation. The chain is tRNA-queuosine alpha-mannosyltransferase (gtdc1) from Danio rerio (Zebrafish).